Consider the following 727-residue polypeptide: Glucans biosynthesis glucosyltransferase H (727 aa).

Residues 18 to 41 (SAMPNERPGAMEPQKLSKMPEGFP) form a disordered region. 7 helical membrane-spanning segments follow: residues 58 to 78 (FLVV…MGAV), 97 to 117 (VNFC…LILL), 278 to 298 (LQQF…GWWV), 408 to 428 (IMAY…LMLA), 460 to 480 (LFYI…LLLL), 496 to 516 (IFSV…MMFI), and 572 to 592 (LLAW…ISAW).

This sequence belongs to the glycosyltransferase 2 family. OpgH subfamily.

The protein resides in the cell inner membrane. The protein operates within glycan metabolism; osmoregulated periplasmic glucan (OPG) biosynthesis. Functionally, involved in the biosynthesis of osmoregulated periplasmic glucans (OPGs). The sequence is that of Glucans biosynthesis glucosyltransferase H from Shewanella baltica (strain OS155 / ATCC BAA-1091).